The sequence spans 119 residues: Large ribosomal subunit protein bL20 (119 aa).

It belongs to the bacterial ribosomal protein bL20 family.

In terms of biological role, binds directly to 23S ribosomal RNA and is necessary for the in vitro assembly process of the 50S ribosomal subunit. It is not involved in the protein synthesizing functions of that subunit. The chain is Large ribosomal subunit protein bL20 from Chloroflexus aurantiacus (strain ATCC 29366 / DSM 635 / J-10-fl).